We begin with the raw amino-acid sequence, 314 residues long: MKIILANPRGFCAGVDRAISIVELALEIHGAPIYVRHEVVHNRFVVNGLRDRGAIFVEELSEVPDGAIVIFSAHGVSQAVRQEAKDRNLKVFDATCPLVTKVHMQVARASRKGTKAILIGHKGHPEVEGTMGQYSNEDGGIFLIEKVEDIARLPMQDNDDLTFMTQTTLSLDDTAETIAALKEKYPAIQGPHKNDICYATTNRQEAVRELAKLSDLVLVVGSKNSSNSNRLAELASRMGIKSQLLDDPSDIQDDWFNDVKTIGITAGASAPEELVQSIISRLKEFGANTIEELQGLEENMFFEVPKELRIKEVN.

Cys12 serves as a coordination point for [4Fe-4S] cluster. (2E)-4-hydroxy-3-methylbut-2-enyl diphosphate-binding residues include His41 and His74. Residues His41 and His74 each contribute to the dimethylallyl diphosphate site. Residues His41 and His74 each contribute to the isopentenyl diphosphate site. Cys96 contacts [4Fe-4S] cluster. Residue His124 coordinates (2E)-4-hydroxy-3-methylbut-2-enyl diphosphate. His124 serves as a coordination point for dimethylallyl diphosphate. His124 contributes to the isopentenyl diphosphate binding site. Residue Glu126 is the Proton donor of the active site. (2E)-4-hydroxy-3-methylbut-2-enyl diphosphate is bound at residue Thr167. A [4Fe-4S] cluster-binding site is contributed by Cys197. (2E)-4-hydroxy-3-methylbut-2-enyl diphosphate is bound by residues Ser225, Ser226, Asn227, and Ser269. Positions 225, 226, 227, and 269 each coordinate dimethylallyl diphosphate. The isopentenyl diphosphate site is built by Ser225, Ser226, Asn227, and Ser269.

The protein belongs to the IspH family. The cofactor is [4Fe-4S] cluster.

The enzyme catalyses isopentenyl diphosphate + 2 oxidized [2Fe-2S]-[ferredoxin] + H2O = (2E)-4-hydroxy-3-methylbut-2-enyl diphosphate + 2 reduced [2Fe-2S]-[ferredoxin] + 2 H(+). It carries out the reaction dimethylallyl diphosphate + 2 oxidized [2Fe-2S]-[ferredoxin] + H2O = (2E)-4-hydroxy-3-methylbut-2-enyl diphosphate + 2 reduced [2Fe-2S]-[ferredoxin] + 2 H(+). It functions in the pathway isoprenoid biosynthesis; dimethylallyl diphosphate biosynthesis; dimethylallyl diphosphate from (2E)-4-hydroxy-3-methylbutenyl diphosphate: step 1/1. The protein operates within isoprenoid biosynthesis; isopentenyl diphosphate biosynthesis via DXP pathway; isopentenyl diphosphate from 1-deoxy-D-xylulose 5-phosphate: step 6/6. Catalyzes the conversion of 1-hydroxy-2-methyl-2-(E)-butenyl 4-diphosphate (HMBPP) into a mixture of isopentenyl diphosphate (IPP) and dimethylallyl diphosphate (DMAPP). Acts in the terminal step of the DOXP/MEP pathway for isoprenoid precursor biosynthesis. The chain is 4-hydroxy-3-methylbut-2-enyl diphosphate reductase from Haemophilus influenzae (strain PittGG).